Reading from the N-terminus, the 258-residue chain is Flap endonuclease Xni (258 aa).

Asp-109 is a Mg(2+) binding site. The 90-residue stretch at 165–254 folds into the 5'-3' exonuclease domain; sequence VKPEQLPDYW…GFNLQDIRYL (90 aa). Leu-176, Ala-177, Pro-185, Ile-187, and Ile-190 together coordinate K(+). An interaction with DNA region spans residues 189 to 194; that stretch reads GIGPKA.

It belongs to the Xni family. Mg(2+) is required as a cofactor. Requires K(+) as cofactor.

Functionally, has flap endonuclease activity. During DNA replication, flap endonucleases cleave the 5'-overhanging flap structure that is generated by displacement synthesis when DNA polymerase encounters the 5'-end of a downstream Okazaki fragment. This is Flap endonuclease Xni from Photobacterium profundum (strain SS9).